The primary structure comprises 120 residues: Large ribosomal subunit protein eL8 (120 aa).

It belongs to the eukaryotic ribosomal protein eL8 family. As to quaternary structure, part of the 50S ribosomal subunit. Probably part of the RNase P complex.

It is found in the cytoplasm. Multifunctional RNA-binding protein that recognizes the K-turn motif in ribosomal RNA, the RNA component of RNase P, box H/ACA, box C/D and box C'/D' sRNAs. The sequence is that of Large ribosomal subunit protein eL8 from Methanosarcina acetivorans (strain ATCC 35395 / DSM 2834 / JCM 12185 / C2A).